The sequence spans 316 residues: Transaldolase A (316 aa).

Lys-131 functions as the Schiff-base intermediate with substrate in the catalytic mechanism.

This sequence belongs to the transaldolase family. Type 1 subfamily. Homodimer.

Its subcellular location is the cytoplasm. It catalyses the reaction D-sedoheptulose 7-phosphate + D-glyceraldehyde 3-phosphate = D-erythrose 4-phosphate + beta-D-fructose 6-phosphate. It participates in carbohydrate degradation; pentose phosphate pathway; D-glyceraldehyde 3-phosphate and beta-D-fructose 6-phosphate from D-ribose 5-phosphate and D-xylulose 5-phosphate (non-oxidative stage): step 2/3. Transaldolase is important for the balance of metabolites in the pentose-phosphate pathway. The sequence is that of Transaldolase A from Salmonella typhimurium (strain LT2 / SGSC1412 / ATCC 700720).